A 102-amino-acid chain; its full sequence is Polymeric immunoglobulin receptor (102 aa).

As to quaternary structure, interacts (mainly via CDR1-like domain) with dimeric IgA. Interacts (mainly via CDR2-like domain) with pentameric IgM. Either free or part of the secretory IgA (sIgA) complex that consists of two, four or five IgA monomers, and two additional non-Ig polypeptides, namely the JCHAIN and the secretory component (the proteolytic product of PIGR). Free secretory component interacts with bacterial antigens toxA of C.difficile and eaeA of E.coli. In terms of processing, N-glycosylated. N-glycosylation is required for anchoring IgA molecules to mucus, but is not necessary for Ig binding.

It localises to the cell membrane. The protein resides in the secreted. In terms of biological role, mediates selective transcytosis of polymeric IgA and IgM across mucosal epithelial cells. Binds polymeric IgA and IgM at the basolateral surface of epithelial cells. The complex is then transported across the cell to be secreted at the apical surface. During this process, a cleavage occurs that separates the extracellular (known as the secretory component) from the transmembrane segment. Through its N-linked glycans ensures anchoring of secretory IgA (sIgA) molecules to mucus lining the epithelial surface to neutralize extracellular pathogens. On its own (free form) may act as a non-specific microbial scavenger to prevent pathogen interaction with epithelial cells. This Sus scrofa (Pig) protein is Polymeric immunoglobulin receptor (PIGR).